Reading from the N-terminus, the 132-residue chain is Small ribosomal subunit protein uS8 (132 aa).

The protein belongs to the universal ribosomal protein uS8 family. In terms of assembly, part of the 30S ribosomal subunit. Contacts proteins S5 and S12.

One of the primary rRNA binding proteins, it binds directly to 16S rRNA central domain where it helps coordinate assembly of the platform of the 30S subunit. The protein is Small ribosomal subunit protein uS8 of Saccharopolyspora erythraea (strain ATCC 11635 / DSM 40517 / JCM 4748 / NBRC 13426 / NCIMB 8594 / NRRL 2338).